Reading from the N-terminus, the 272-residue chain is Putative pyruvate, phosphate dikinase regulatory protein (272 aa).

Residue 154–161 (GVSRTSKS) coordinates ADP.

This sequence belongs to the pyruvate, phosphate/water dikinase regulatory protein family. PDRP subfamily.

It carries out the reaction N(tele)-phospho-L-histidyl/L-threonyl-[pyruvate, phosphate dikinase] + ADP = N(tele)-phospho-L-histidyl/O-phospho-L-threonyl-[pyruvate, phosphate dikinase] + AMP + H(+). The enzyme catalyses N(tele)-phospho-L-histidyl/O-phospho-L-threonyl-[pyruvate, phosphate dikinase] + phosphate + H(+) = N(tele)-phospho-L-histidyl/L-threonyl-[pyruvate, phosphate dikinase] + diphosphate. Functionally, bifunctional serine/threonine kinase and phosphorylase involved in the regulation of the pyruvate, phosphate dikinase (PPDK) by catalyzing its phosphorylation/dephosphorylation. The sequence is that of Putative pyruvate, phosphate dikinase regulatory protein from Wolbachia sp. subsp. Brugia malayi (strain TRS).